The sequence spans 377 residues: ATP-dependent (S)-NAD(P)H-hydrate dehydratase (377 aa).

Residues 10–366 (LLHLSRQLIQ…EYLHESFTEL (357 aa)) enclose the YjeF C-terminal domain. Residues Gly-148 and 201-207 (NVVEFQR) each bind (6S)-NADPHX. Residues 245-249 (KGEHD) and 264-273 (GSNKRVGGQG) contribute to the ATP site. Residue Asp-274 participates in (6S)-NADPHX binding.

The protein belongs to the NnrD/CARKD family. Mg(2+) is required as a cofactor.

The protein localises to the cytoplasm. The catalysed reaction is (6S)-NADHX + ATP = ADP + phosphate + NADH + H(+). It catalyses the reaction (6S)-NADPHX + ATP = ADP + phosphate + NADPH + H(+). Catalyzes the dehydration of the S-form of NAD(P)HX at the expense of ATP, which is converted to ADP. Together with NAD(P)HX epimerase, which catalyzes the epimerization of the S- and R-forms, the enzyme allows the repair of both epimers of NAD(P)HX, a damaged form of NAD(P)H that is a result of enzymatic or heat-dependent hydration. This chain is ATP-dependent (S)-NAD(P)H-hydrate dehydratase, found in Candida albicans (strain SC5314 / ATCC MYA-2876) (Yeast).